Consider the following 347-residue polypeptide: MITERQRQILNLIVSLYAKDHTPIGSKSLLDSIQASSATIRNDMKALERLGLIQKEHTSSGRIPSVSGYKYFVENVIQLEEFSQNDLFKVMKAFDGDFYRLSDLFKTAAKSLSELTGLTSFVLNAPQRDQQLVSFEMVMLDNHSVLSVITLGTGEVRTNQFILPKSMTEADLAVFSNLVKERLVGKKVIDIHYTLRTEIPQIVQRYFKVTSEVLQLFESIFDDLFKEHLTVAGHKNIFDYATDNLAELYKLFSDDERMLHEIREITNNDEMRAVKFDNDEKFMKNLTIISQKFVIPYRGFGTLTVVGPVEMDYQRTLSVLDLVAKVLTMKLSDYYRYLDGNHYEISK.

Belongs to the HrcA family.

Its function is as follows. Negative regulator of class I heat shock genes (grpE-dnaK-dnaJ and groELS operons). Prevents heat-shock induction of these operons. The chain is Heat-inducible transcription repressor HrcA from Lactococcus lactis subsp. cremoris (strain MG1363).